Consider the following 246-residue polypeptide: ATP synthase subunit a (246 aa).

A propeptide spans 1-3 (removed in mature form); the sequence is MIY. Transmembrane regions (helical) follow at residues 25 to 45, 51 to 71, 79 to 99, 112 to 132, 138 to 158, 178 to 198, and 203 to 223; these read VNNY…SVFL, LGFN…LNMV, GGMY…ANLV, LVAI…MGLS, FFAL…LVLI, VLSG…LMGS, and FMGG…EFAI.

The protein belongs to the ATPase A chain family. As to quaternary structure, F-type ATPases have 2 components, CF(1) - the catalytic core - and CF(0) - the membrane proton channel. CF(1) has five subunits: alpha(3), beta(3), gamma(1), delta(1), epsilon(1). CF(0) has three main subunits: a, b and c.

The protein localises to the mitochondrion inner membrane. Functionally, mitochondrial membrane ATP synthase (F(1)F(0) ATP synthase or Complex V) produces ATP from ADP in the presence of a proton gradient across the membrane which is generated by electron transport complexes of the respiratory chain. F-type ATPases consist of two structural domains, F(1) - containing the extramembraneous catalytic core and F(0) - containing the membrane proton channel, linked together by a central stalk and a peripheral stalk. During catalysis, ATP synthesis in the catalytic domain of F(1) is coupled via a rotary mechanism of the central stalk subunits to proton translocation. Key component of the proton channel; it may play a direct role in the translocation of protons across the membrane. This Debaryomyces hansenii (strain ATCC 36239 / CBS 767 / BCRC 21394 / JCM 1990 / NBRC 0083 / IGC 2968) (Yeast) protein is ATP synthase subunit a (ATP6).